A 511-amino-acid polypeptide reads, in one-letter code: Bifunctional purine biosynthesis protein PurH (511 aa).

Positions 1–145 constitute an MGS-like domain; that stretch reads MKQRALVSVS…KNHKFVSVIV (145 aa).

It belongs to the PurH family.

It carries out the reaction (6R)-10-formyltetrahydrofolate + 5-amino-1-(5-phospho-beta-D-ribosyl)imidazole-4-carboxamide = 5-formamido-1-(5-phospho-D-ribosyl)imidazole-4-carboxamide + (6S)-5,6,7,8-tetrahydrofolate. It catalyses the reaction IMP + H2O = 5-formamido-1-(5-phospho-D-ribosyl)imidazole-4-carboxamide. The protein operates within purine metabolism; IMP biosynthesis via de novo pathway; 5-formamido-1-(5-phospho-D-ribosyl)imidazole-4-carboxamide from 5-amino-1-(5-phospho-D-ribosyl)imidazole-4-carboxamide (10-formyl THF route): step 1/1. Its pathway is purine metabolism; IMP biosynthesis via de novo pathway; IMP from 5-formamido-1-(5-phospho-D-ribosyl)imidazole-4-carboxamide: step 1/1. This Bacillus cereus (strain AH187) protein is Bifunctional purine biosynthesis protein PurH.